A 311-amino-acid polypeptide reads, in one-letter code: Geranylgeranyl transferase type-2 subunit alpha (311 aa).

Residues 12–43 (EKAKAQRLKELEKIESYNKLVKSFEELREKQN) are a coiled coil. PFTA repeat units follow at residues 49–82 (ISLSVSKLVLIENPEFYTIWNYRRLAILQFTETK), 93–126 (NEMKFLEECIQRFTKSYWIWFHRQWIALRMDNCD), 129–162 (REMKLCTKLLNFDLRNFHCWGHRRFILKHSNIKL), 164–197 (DELKYTTEKVEQNFSNYSAWHQRSSILPKIYKEP), and 206–239 (EEFELVRNAVYTEPKDSSSWIYHKWLVATIKSIP).

Belongs to the protein prenyltransferase subunit alpha family. In terms of assembly, heterodimer of an alpha and a beta subunit.

It catalyses the reaction geranylgeranyl diphosphate + L-cysteinyl-[protein] = S-geranylgeranyl-L-cysteinyl-[protein] + diphosphate. In terms of biological role, catalyzes the transfer of a geranylgeranyl moiety from geranylgeranyl diphosphate to proteins with a C-terminal sequence motif -XCC or -XCXC, where both cysteines may become modified. This chain is Geranylgeranyl transferase type-2 subunit alpha (rabggta), found in Dictyostelium discoideum (Social amoeba).